A 294-amino-acid chain; its full sequence is ATP synthase gamma chain (294 aa).

Belongs to the ATPase gamma chain family. As to quaternary structure, F-type ATPases have 2 components, CF(1) - the catalytic core - and CF(0) - the membrane proton channel. CF(1) has five subunits: alpha(3), beta(3), gamma(1), delta(1), epsilon(1). CF(0) has three main subunits: a, b and c.

Its subcellular location is the cell inner membrane. Its function is as follows. Produces ATP from ADP in the presence of a proton gradient across the membrane. The gamma chain is believed to be important in regulating ATPase activity and the flow of protons through the CF(0) complex. This Campylobacter lari (strain RM2100 / D67 / ATCC BAA-1060) protein is ATP synthase gamma chain.